The chain runs to 553 residues: MAPPTAVGSSINFEGHPTIKSTQDPLVQKLSLNTDTVIRHNAPPPTLYEDGLLEKGTTISSTGALMAYSGNKTGRSPKDKRIVDESTSSHNIWWGPVNKQVGELTWEISRSRALDYLRTREKLFVVDAYAGWDPSYRIKVRIICARAYHALFMTNMLIRPTEEELKNFGEPDFTIYNAGQFPANIHTKGMTSATSVEINFKDMEMVILGTEYAGEMKKGIFTVMFYLMPIKHKVLTLHSSCNQGVEKGDVTLFFGLSGTGKTTLSADPQRKLIGDDEHCWSDNGVFNIEGGCYAKCLDLSAEKEPEIFNSIKFGAILENVVYXXITKVVDYGDSSITENTRCAYPIDFIPSAKIPCLPTPIPQYYLLTCDASGVLATVSKLTNAQVMYHFISGYTSKMAGSEEGVTEPHATFSACFGQPFLVLHPMKYAQQLADKISEHNANAWLLNTGWVGSSVAQGGGKRCPLKYTRAILDAIHSGELSKVEYEKVPVFNLNVPTSCPGVPSEILNPTKAWTQGTDSFNKEIKSLATKFAENFKTYADQATAEVKAAGPEA.

Residues 1 to 22 form a disordered region; it reads MAPPTAVGSSINFEGHPTIKST. 255 to 262 is a binding site for ATP; sequence GLSGTGKT.

It belongs to the phosphoenolpyruvate carboxykinase (ATP) family.

It carries out the reaction oxaloacetate + ATP = phosphoenolpyruvate + ADP + CO2. It functions in the pathway carbohydrate biosynthesis; gluconeogenesis. This chain is Phosphoenolpyruvate carboxykinase (ATP) (PCK1), found in Candida albicans (Yeast).